We begin with the raw amino-acid sequence, 137 residues long: MAEALYYGGRQRQDQPRSTQLVKATTAVVAGGSLLILAGLVLAATVIGLTTITPLFVIFSPVLVPAVITVALLGLGFLASGGFGVAAITVLTWIYRYVTGKHPPGANQLDTARHKLMSKAREIKDYGQQQTSGAQAS.

A2 is modified (N-acetylalanine; alternate). 2 helical membrane-spanning segments follow: residues 27 to 47 (AVVAGGSLLILAGLVLAATVI) and 55 to 75 (LFVIFSPVLVPAVITVALLGL).

This sequence belongs to the oleosin family. In terms of tissue distribution, expressed in seeds (at protein level).

It is found in the lipid droplet. Its subcellular location is the membrane. Functionally, may have a structural role to stabilize the lipid body during desiccation of the seed by preventing coalescence of the oil. Probably interacts with both lipid and phospholipid moieties of lipid bodies. May also provide recognition signals for specific lipase anchorage in lipolysis during seedling growth. In Arachis hypogaea (Peanut), this protein is Oleosin Ara h 11.0102.